We begin with the raw amino-acid sequence, 921 residues long: Phototropin-1A (921 aa).

Positions 1–11 are enriched in gly residues; that stretch reads MASKGTEGGHG. Disordered stretches follow at residues 1–59 and 88–118; these read MASK…SPFL and TGLPQGVSARPSSGSARTSSEDNPQQQQSAA. The span at 40 to 51 shows a compositional bias: low complexity; that stretch reads SSASSFRTAAAA. The span at 97–117 shows a compositional bias: polar residues; sequence RPSSGSARTSSEDNPQQQQSA. The PAS 1 domain maps to 123-197; sequence VSEELRAALS…KIRQSLANGS (75 aa). FMN contacts are provided by residues 172-177, R190, N205, N215, and Q236; that span reads NCRFLQ. C173 carries the post-translational modification S-4a-FMN cysteine. One can recognise a PAC 1 domain in the interval 197–251; that stretch reads SNYCGRILNYKKDGTPFWNLLTIAPIKDEDGRLLKFIGMQVEVSKYTEGKKDTVV. Polar residues predominate over residues 286-295; that stretch reads RSLSESSNNT. 2 disordered regions span residues 286–347 and 364–390; these read RSLS…NRTR and SVEKNMLKPRDEDPLIDSDDERPESFE. Basic and acidic residues-rich tracts occupy residues 312–321 and 364–376; these read PSKRSSESGS and SVEKNMLKPRDED. One can recognise a PAS 2 domain in the interval 400–473; sequence RGIDLATTLE…RKIRDAIDNQ (74 aa). FMN-binding positions include 449–454, R467, N482, N492, and Q513; that span reads NCRFLQ. The residue at position 450 (C450) is an S-4a-FMN cysteine. Positions 474 to 528 constitute a PAC 2 domain; it reads AEVTVQLINYTKSGKKFWNLFHLQPMRDQKGDVQYFIGVQLDGTEHVQDDAAKEG. Positions 594–881 constitute a Protein kinase domain; the sequence is FRPVKPLGSG…ANEIKGHPFF (288 aa). Residues 600–608 and K623 each bind ATP; that span reads LGSGDTGSV. The active-site Proton acceptor is D719.

The protein belongs to the protein kinase superfamily. Ser/Thr protein kinase family. Homodimer. The cofactor is FMN. Autophosphorylated in response to blue light irradiation. Post-translationally, 2 molecules of FMN bind covalently to cysteines after exposure to blue light and are reversed in the dark. Highly expressed in coleoptiles of dark-grown seedlings.

The catalysed reaction is L-seryl-[protein] + ATP = O-phospho-L-seryl-[protein] + ADP + H(+). The enzyme catalyses L-threonyl-[protein] + ATP = O-phospho-L-threonyl-[protein] + ADP + H(+). Functionally, protein kinase that acts as a blue light photoreceptor in a signal-transduction pathway for phototropic responses. Regulates a wide range of physiological activities in plants that maximize the efficiency of photosynthesis, such as chloroplast relocations, stomata opening, and leaf expansion. The protein is Phototropin-1A (PHOT1A) of Oryza sativa subsp. japonica (Rice).